The chain runs to 217 residues: uncharacterized protein (217 aa).

The region spanning 98-203 (QRRQYVRTDA…GDQQALLQYC (106 aa)) is the PilZ domain.

This is an uncharacterized protein from Bacillus subtilis (strain 168).